We begin with the raw amino-acid sequence, 187 residues long: ECF RNA polymerase sigma factor SigW (187 aa).

The segment at 3–95 is sigma-70 factor domain-2; sequence MMIKKRIKQV…RKKKPDYYLD (93 aa). The Polymerase core binding signature appears at 47–50; the sequence is DIAQ. The interval 125 to 187 is sigma-70 factor domain-4; it reads ELSNTIQQKI…EALRKQLRDL (63 aa). A DNA-binding region (H-T-H motif) is located at residues 166–184; that stretch reads VGTVKTRIHRGREALRKQL.

It belongs to the sigma-70 factor family. ECF subfamily. As to quaternary structure, interacts transiently with the RNA polymerase catalytic core formed by RpoA, RpoB, RpoC and RpoZ (2 alpha, 1 beta, 1 beta' and 1 omega subunit) to form the RNA polymerase holoenzyme that can initiate transcription. Forms a heterodimer with cognate anti-sigma factor RsiW, which prevents it from binding to the -10 and -35 promoter elements.

With respect to regulation, extracytoplasmic function (ECF) sigma factors are held in an inactive form by a cognate anti-sigma factor (RsiW for this protein) until released by regulated membrane proteolysis (RIP). RIP occurs when an extracytoplasmic signal (envelope stress) triggers a concerted proteolytic cascade to transmit information and elicit cellular responses. The anti-sigma factor RsiW is a membrane protein, binding sigma-W in the cytoplasm. RsiW is first cut extracytoplasmically (site-1 protease, S1P, by PrsW), then within the membrane itself (site-2 protease, S2P, by RasP), while cytoplasmic proteases (predominantly ClpX-ClpP) finish degrading the regulatory protein, liberating sigma-W. In terms of biological role, sigma factors are initiation factors that promote the attachment of RNA polymerase (RNAP) to specific initiation sites and are then released. Sigma-W controls genes involved in response to cell envelope stress such as antimicrobial peptides, alkaline pH, transport processes and detoxification. The sequence is that of ECF RNA polymerase sigma factor SigW (sigW) from Bacillus subtilis (strain 168).